The primary structure comprises 263 residues: Phosphatidylglycerol--prolipoprotein diacylglyceryl transferase (263 aa).

3 helical membrane passes run L17–G37, L56–Y76, and I88–A108. Residue R139 coordinates a 1,2-diacyl-sn-glycero-3-phospho-(1'-sn-glycerol). A run of 2 helical transmembrane segments spans residues Q176–A196 and I236–F256.

It belongs to the Lgt family.

It localises to the cell inner membrane. It catalyses the reaction L-cysteinyl-[prolipoprotein] + a 1,2-diacyl-sn-glycero-3-phospho-(1'-sn-glycerol) = an S-1,2-diacyl-sn-glyceryl-L-cysteinyl-[prolipoprotein] + sn-glycerol 1-phosphate + H(+). Its pathway is protein modification; lipoprotein biosynthesis (diacylglyceryl transfer). Functionally, catalyzes the transfer of the diacylglyceryl group from phosphatidylglycerol to the sulfhydryl group of the N-terminal cysteine of a prolipoprotein, the first step in the formation of mature lipoproteins. The protein is Phosphatidylglycerol--prolipoprotein diacylglyceryl transferase of Dechloromonas aromatica (strain RCB).